The primary structure comprises 176 residues: uncharacterized protein (176 aa).

An N-terminal signal peptide occupies residues 1–22 (MKYNNIIFLGLCLGLTTYSALS). Cys-38 and Cys-78 are disulfide-bonded.

Belongs to the fimbrial protein family.

The protein localises to the fimbrium. This is an uncharacterized protein from Escherichia coli (strain K12).